The sequence spans 242 residues: Probable transcriptional regulatory protein BTH_I1015 (242 aa).

The protein belongs to the TACO1 family.

The protein resides in the cytoplasm. This chain is Probable transcriptional regulatory protein BTH_I1015, found in Burkholderia thailandensis (strain ATCC 700388 / DSM 13276 / CCUG 48851 / CIP 106301 / E264).